A 285-amino-acid chain; its full sequence is MAGAGLIAIKRRIKSINNTKKITKAIGLVATSKLRKARQKLELNNAYYSSVNEIMNGILADKNLEKGIYFKDNGVNKKLYIVITSDSGLCGGFNGNVIAKTLETISGDRENSVIITVGKKGRTYLKKFKIDSIAEFVEIPEIPTLKEVKAILEKALNLYMNKEISEINVVYTHFVSSVKQEAKVKKILPITMEEDSEQTSTFVEFEPDKNIVLEGISELYLKQTLLNLMLNSKTSEESARMTAMDGATSNANDLLDKLNLQYNRIRQSSITQEISEIVGGAQAQE.

This sequence belongs to the ATPase gamma chain family. F-type ATPases have 2 components, CF(1) - the catalytic core - and CF(0) - the membrane proton channel. CF(1) has five subunits: alpha(3), beta(3), gamma(1), delta(1), epsilon(1). CF(0) has three main subunits: a, b and c.

The protein localises to the cell membrane. Its function is as follows. Produces ATP from ADP in the presence of a proton gradient across the membrane. The gamma chain is believed to be important in regulating ATPase activity and the flow of protons through the CF(0) complex. The sequence is that of ATP synthase gamma chain from Clostridium novyi (strain NT).